The sequence spans 73 residues: Maltose-binding periplasmic protein (73 aa).

An N-terminal signal peptide occupies residues 1-30 (MMTKTNLKMGARTLALSVLATLVLSASALA).

The protein belongs to the bacterial solute-binding protein 1 family.

The protein localises to the periplasm. Functionally, involved in the high-affinity maltose membrane transport system. Initial receptor for the active transport of and chemotaxis toward maltooligosaccharides. The chain is Maltose-binding periplasmic protein (malE) from Photorhabdus luminescens (Xenorhabdus luminescens).